The sequence spans 105 residues: Sulfite reductase, dissimilatory-type subunit gamma (105 aa).

This sequence belongs to the DsrC/TusE family. As to quaternary structure, heterohexamer of two alpha, two beta and two gamma subunits.

The protein localises to the cytoplasm. It carries out the reaction [DsrC protein]-trisulfide + NAD(+) + 3 H2O = [DsrC protein]-dithiol + sulfite + NADH + 3 H(+). In terms of biological role, catalyzes the reduction of sulfite to sulfide. This is the terminal oxidation reaction in sulfate respiration, a process catalyzed by the sulfate-reducing bacteria. The protein is Sulfite reductase, dissimilatory-type subunit gamma (dsvC) of Nitratidesulfovibrio vulgaris (strain ATCC 29579 / DSM 644 / CCUG 34227 / NCIMB 8303 / VKM B-1760 / Hildenborough) (Desulfovibrio vulgaris).